Reading from the N-terminus, the 201-residue chain is Adenylyl-sulfate kinase (201 aa).

An ATP-binding site is contributed by 35–42; it reads GLSGSGKS. Ser109 functions as the Phosphoserine intermediate in the catalytic mechanism.

It belongs to the APS kinase family.

It carries out the reaction adenosine 5'-phosphosulfate + ATP = 3'-phosphoadenylyl sulfate + ADP + H(+). Its pathway is sulfur metabolism; hydrogen sulfide biosynthesis; sulfite from sulfate: step 2/3. Its function is as follows. Catalyzes the synthesis of activated sulfate. The protein is Adenylyl-sulfate kinase of Salmonella arizonae (strain ATCC BAA-731 / CDC346-86 / RSK2980).